We begin with the raw amino-acid sequence, 125 residues long: MNGNHSAPAIAIAVIDGCDGLWREVLLGIEEEGIPFRLQHHPAGEVVDSAWQAARSSPLLVGIACDRHMLVVHYKNLPASAPLFTLMHHQDSQAHRNTGNNAARLVKGIPFRDLNSEATGEQQDE.

Glu-31 contributes to the Mg(2+) binding site.

This sequence belongs to the DdrB/PduH family. In terms of assembly, component of the DDR complex, a heterotetramer of DdrA(2)/DdrB(2). The DDR complex interacts with the diol dehydratase complex in the presence of ADP but not ATP. The cofactor is Mg(2+).

The catalysed reaction is ATP + H2O = ADP + phosphate + H(+). Its function is as follows. Small subunit of the diol dehydratase-reactivating factor (DDR), which reactivates suicidally inhibited adenosylcobalamin-dependent diol dehydratase (DD, pddA, pddB, pddC). DDR acts as a chaperone, reactivates inactivated DD holoenzyme in the presence of ATP, Mg(2+) and free adenosylcobalamin (AdoCbl), by mediating the exchange of the tightly bound damaged cofactor AdoCbl for a free intact one. Reactivation takes place in two steps: ADP-dependent cobalamin release, and ATP-dependent dissociation of the DD apoenzyme-DDR complex. DDR has weak ATPase activity which is required for DD reactivation. Activates glycerol-inactivated, O2-inactivated holoenzyme and inactivated enzyme-cyanocobalamin complex. Also reactivates glycerol-inactivated hologlycerol dehydratase, a DD isozyme. This Klebsiella michiganensis (strain ATCC 8724 / DSM 4798 / JCM 20051 / NBRC 3318 / NRRL B-199 / KCTC 1686 / BUCSAV 143 / CCM 1901) protein is Diol dehydratase-reactivating factor small subunit.